A 143-amino-acid polypeptide reads, in one-letter code: Large ribosomal subunit protein uL16 (143 aa).

It belongs to the universal ribosomal protein uL16 family. Part of the 50S ribosomal subunit.

Functionally, binds 23S rRNA and is also seen to make contacts with the A and possibly P site tRNAs. The polypeptide is Large ribosomal subunit protein uL16 (Tropheryma whipplei (strain TW08/27) (Whipple's bacillus)).